The primary structure comprises 29 residues: Amelogenin-like protein (29 aa).

Position 16 is a phosphoserine (Ser-16).

It belongs to the amelogenin family.

Its subcellular location is the secreted. The protein resides in the extracellular space. The protein localises to the extracellular matrix. In terms of biological role, tooth enamel proteins are produced in ameloblasts and play a role in biomineralization. This Oryctolagus cuniculus (Rabbit) protein is Amelogenin-like protein (AMEL).